A 379-amino-acid chain; its full sequence is Beta-1,3-N-acetylglucosaminyltransferase lunatic fringe (379 aa).

Residues 1–8 lie on the Cytoplasmic side of the membrane; that stretch reads MLKRCGRR. The helical; Signal-anchor for type II membrane protein transmembrane segment at 9–29 threads the bilayer; it reads LLLALAGALLACLLVLTADPP. Over 30–379 the chain is Lumenal; it reads PPPLPAERGR…TPWCPRTAIF (350 aa). The segment at 86–107 is disordered; the sequence is RDAGPPPGAAPRPADGHPRPLA. R129 is a substrate binding site. N-linked (GlcNAc...) asparagine glycosylation is present at N167. 2 disulfide bridges follow: C168-C179 and C197-C260. Residue D201 coordinates substrate. D202 is a binding site for Mn(2+). Residue D290 is part of the active site. Position 314 (H314) interacts with Mn(2+). A disulfide bond links C364 and C373.

It belongs to the glycosyltransferase 31 family. It depends on Mn(2+) as a cofactor. The cofactor is Co(2+). In terms of processing, a soluble form may be derived from the membrane form by proteolytic processing.

It is found in the golgi apparatus. Its subcellular location is the golgi apparatus membrane. The catalysed reaction is 3-O-(alpha-L-fucosyl)-L-threonyl-[EGF-like domain protein] + UDP-N-acetyl-alpha-D-glucosamine = 3-O-(N-acetyl-beta-D-glucosaminyl-(1-&gt;3)-alpha-L-fucosyl)-L-threonyl-[EGF-like domain protein] + UDP + H(+). The enzyme catalyses 3-O-(alpha-L-fucosyl)-L-seryl-[EGF-like domain protein] + UDP-N-acetyl-alpha-D-glucosamine = 3-O-(N-acetyl-beta-D-glucosaminyl-(1-&gt;3)-alpha-L-fucosyl)-L-seryl-[EGF-like domain protein] + UDP + H(+). Functionally, glycosyltransferase that initiates the elongation of O-linked fucose residues attached to EGF-like repeats in the extracellular domain of Notch molecules. Modulates NOTCH1 activity by modifying O-fucose residues at specific EGF-like domains resulting in inhibition of NOTCH1 activation by JAG1 and enhancement of NOTCH1 activation by DLL1 via an increase in its binding to DLL1. Decreases the binding of JAG1 to NOTCH2 but not that of DLL1. Essential mediator of somite segmentation and patterning. The protein is Beta-1,3-N-acetylglucosaminyltransferase lunatic fringe of Homo sapiens (Human).